Here is a 398-residue protein sequence, read N- to C-terminus: Acetyl-CoA acetyltransferase (398 aa).

Position 2 is an N-acetylserine (S2). C91 (acyl-thioester intermediate) is an active-site residue. The CoA site is built by Y186 and K231. Position 186 (Y186) interacts with K(+). Residues A248, A249, and A251 each coordinate K(+). S252 provides a ligand contact to CoA. Residue V350 coordinates K(+). Residues H354 and C384 each act as proton acceptor in the active site.

This sequence belongs to the thiolase-like superfamily. Thiolase family. In terms of assembly, homotetramer.

Its subcellular location is the cytoplasm. It carries out the reaction 2 acetyl-CoA = acetoacetyl-CoA + CoA. It participates in metabolic intermediate biosynthesis; (R)-mevalonate biosynthesis; (R)-mevalonate from acetyl-CoA: step 1/3. Its function is as follows. Acetyl-CoA acetyltransferase; part of the first module of ergosterol biosynthesis pathway that includes the early steps of the pathway, conserved across all eukaryotes, and which results in the formation of mevalonate from acetyl-coenzyme A (acetyl-CoA). In this module, the acetyl-CoA acetyltransferase ERG10 catalyzes the formation of acetoacetyl-CoA. The hydroxymethylglutaryl-CoA synthase ERG13 then condenses acetyl-CoA with acetoacetyl-CoA to form HMG-CoA. The rate-limiting step of the early module is the reduction to mevalonate by the 3-hydroxy-3-methylglutaryl-coenzyme A (HMG-CoA) reductases HMG1 and HMG2 which are derived from a single ancestral HMGR gene by gene duplication. The sequence is that of Acetyl-CoA acetyltransferase from Saccharomyces pastorianus (strain ATCC 76670 / Carlsberg bottom yeast no.2 / CBS 1503 / CLIB 180 / NBRC 10610 / NRRL Y-1525) (Saaz-type lager yeast).